Here is a 970-residue protein sequence, read N- to C-terminus: UvrABC system protein A (970 aa).

34–41 (GVSGSGKS) is an ATP binding site. The C4-type zinc-finger motif lies at 284–311 (CPEHGAVMDELSPRLFSFNSPYGACPDC). 2 consecutive ABC transporter domains span residues 340-617 (WSEK…QRSL) and 637-965 (GNGA…KYLA). Position 669–676 (669–676 (GVSGSGKS)) interacts with ATP. Residues 768 to 794 (CEACAGQGVNVIEMNFLPDVYVQCDVC) form a C4-type zinc finger.

Belongs to the ABC transporter superfamily. UvrA family. In terms of assembly, forms a heterotetramer with UvrB during the search for lesions.

It localises to the cytoplasm. The UvrABC repair system catalyzes the recognition and processing of DNA lesions. UvrA is an ATPase and a DNA-binding protein. A damage recognition complex composed of 2 UvrA and 2 UvrB subunits scans DNA for abnormalities. When the presence of a lesion has been verified by UvrB, the UvrA molecules dissociate. The polypeptide is UvrABC system protein A (Synechocystis sp. (strain ATCC 27184 / PCC 6803 / Kazusa)).